A 124-amino-acid polypeptide reads, in one-letter code: MPTINQLIRKPRKSQKEKTASPALQNCPQRRGICTRVMTVTPKKPNSALRKVARVRLSNGFEVTAYIPGIGHNLQEHSVVLIRGGRVKDLPGVRYHIIRGAKDTLGVNNRKQGRSKYGTKKPKA.

The interval 1-25 (MPTINQLIRKPRKSQKEKTASPALQ) is disordered. The residue at position 89 (aspartate 89) is a 3-methylthioaspartic acid.

This sequence belongs to the universal ribosomal protein uS12 family. Part of the 30S ribosomal subunit. Contacts proteins S8 and S17. May interact with IF1 in the 30S initiation complex.

In terms of biological role, with S4 and S5 plays an important role in translational accuracy. Its function is as follows. Interacts with and stabilizes bases of the 16S rRNA that are involved in tRNA selection in the A site and with the mRNA backbone. Located at the interface of the 30S and 50S subunits, it traverses the body of the 30S subunit contacting proteins on the other side and probably holding the rRNA structure together. The combined cluster of proteins S8, S12 and S17 appears to hold together the shoulder and platform of the 30S subunit. The sequence is that of Small ribosomal subunit protein uS12 from Borrelia turicatae (strain 91E135).